The chain runs to 414 residues: 26S proteasome regulatory subunit 6B homolog (414 aa).

The tract at residues 1–33 is disordered; sequence MAATMVLDPKPSSTPPPTLPNPYTTDSQSTDSE. Low complexity predominate over residues 21-30; that stretch reads NPYTTDSQST. A coiled-coil region spans residues 55-81; sequence EYVKDELKNLKREQLRSQEEVKRIQSV. 202–209 serves as a coordination point for ATP; it reads GPPGTGKT.

Belongs to the AAA ATPase family.

Its subcellular location is the cytoplasm. The protein localises to the nucleus. Functionally, the 26S proteasome is involved in the ATP-dependent degradation of ubiquitinated proteins. The regulatory (or ATPase) complex confers ATP dependency and substrate specificity to the 26S complex. In Helianthus annuus (Common sunflower), this protein is 26S proteasome regulatory subunit 6B homolog.